Reading from the N-terminus, the 980-residue chain is Serine/threonine-protein phosphatase 4 regulatory subunit 3 (980 aa).

Residues 1 to 105 (MTTDTRRRVK…EKICQVQGKD (105 aa)) enclose the WH1 domain. Disordered regions lie at residues 640-668 (RDKM…RQME), 695-861 (VSEK…SLCD), and 885-980 (VTAA…ARQA). Residues 695-708 (VSEKNGPQTQNQQK) show a composition bias toward polar residues. Low complexity-rich tracts occupy residues 709–749 (SSPP…SSSP), 757–789 (QTQA…QQTQ), 803–859 (EAPQ…AASL), and 885–926 (VTAA…SPAS). A compositionally biased stretch (polar residues) spans 929–939 (QDANSTEGTSS). A compositionally biased stretch (basic and acidic residues) spans 940 to 951 (EADKTTAKKGLV). Acidic residues predominate over residues 953-968 (YESDSGEDDYEEDEYS).

Belongs to the SMEK family. Serine/threonine-protein phosphatase 4 (PP4) occurs in different assemblies of the catalytic and one or more regulatory subunits. Probably part of a PP4 PPP4C-PPP4R2-PPP4R3 complex containing Pp4-19C, PPP4R2r and flfl. Interacts with mira. Expressed in neuroblasts.

The protein resides in the nucleus. It localises to the membrane. Its subcellular location is the cytoplasm. Regulatory subunit of serine/threonine-protein phosphatase 4. The probable PP4 complex Pp4-19C-PPP4R2r-flfl (PPP4C-PPP4R2-PPP4R3) is required to prevent caspase induced cell death (in vitro). May be involved in DNA damage repair. Key mediator specific for the localization of mira and associated cell fate determinants during both interphase and mitosis. Nuclear Flfl is required to exclude mira/pros from the nucleus when inefficiently bound to the cytoskeleton/cortex, whereas cytosolic or membrane-associated flfl is required for the cortical association and asymmetric localization of mira/pros/brat/stau at metaphase and anaphase. The polypeptide is Serine/threonine-protein phosphatase 4 regulatory subunit 3 (flfl) (Drosophila melanogaster (Fruit fly)).